We begin with the raw amino-acid sequence, 225 residues long: Membrin-11 (225 aa).

Alanine 2 is modified (N-acetylalanine). At 2–200 (ASGIVEGGGS…VLRLIERRNR (199 aa)) the chain is on the cytoplasmic side. The chain crosses the membrane as a helical; Anchor for type IV membrane protein span at residues 201 to 221 (VDTWIKYAGMIATLVILYLFI). Topologically, residues 222–225 (RWTR) are vesicular.

This sequence belongs to the GOSR2 family.

Its subcellular location is the golgi apparatus membrane. In terms of biological role, involved in transport of proteins from the cis/medial-Golgi to the trans-Golgi network. In Arabidopsis thaliana (Mouse-ear cress), this protein is Membrin-11 (MEMB11).